Here is a 265-residue protein sequence, read N- to C-terminus: tRNA (guanine-N(1)-)-methyltransferase (265 aa).

S-adenosyl-L-methionine contacts are provided by residues Gly-119 and 139–144 (IGDYVL).

Belongs to the RNA methyltransferase TrmD family. As to quaternary structure, homodimer.

The protein resides in the cytoplasm. The enzyme catalyses guanosine(37) in tRNA + S-adenosyl-L-methionine = N(1)-methylguanosine(37) in tRNA + S-adenosyl-L-homocysteine + H(+). In terms of biological role, specifically methylates guanosine-37 in various tRNAs. The protein is tRNA (guanine-N(1)-)-methyltransferase of Alcanivorax borkumensis (strain ATCC 700651 / DSM 11573 / NCIMB 13689 / SK2).